We begin with the raw amino-acid sequence, 175 residues long: UPF0398 protein SPP_0409 (175 aa).

This sequence belongs to the UPF0398 family.

This chain is UPF0398 protein SPP_0409, found in Streptococcus pneumoniae (strain P1031).